A 333-amino-acid chain; its full sequence is Aspartate carbamoyltransferase catalytic subunit (333 aa).

Carbamoyl phosphate-binding residues include arginine 61 and threonine 62. L-aspartate is bound at residue lysine 89. Arginine 111, histidine 144, and glutamine 147 together coordinate carbamoyl phosphate. L-aspartate contacts are provided by arginine 184 and arginine 248. Residues glycine 289 and proline 290 each coordinate carbamoyl phosphate.

It belongs to the aspartate/ornithine carbamoyltransferase superfamily. ATCase family. In terms of assembly, heterododecamer (2C3:3R2) of six catalytic PyrB chains organized as two trimers (C3), and six regulatory PyrI chains organized as three dimers (R2).

The catalysed reaction is carbamoyl phosphate + L-aspartate = N-carbamoyl-L-aspartate + phosphate + H(+). Its pathway is pyrimidine metabolism; UMP biosynthesis via de novo pathway; (S)-dihydroorotate from bicarbonate: step 2/3. Functionally, catalyzes the condensation of carbamoyl phosphate and aspartate to form carbamoyl aspartate and inorganic phosphate, the committed step in the de novo pyrimidine nucleotide biosynthesis pathway. In Trichormus variabilis (strain ATCC 29413 / PCC 7937) (Anabaena variabilis), this protein is Aspartate carbamoyltransferase catalytic subunit.